A 450-amino-acid chain; its full sequence is MKVIDQFKNKKVLVLGLAKSGESAARLLDKLGAIVTVNDGKPFEDNPAAQSLLEEGIKVITGGHPLELLDEEFALMVKNPGIPYNNPMIEKALAKGIPVLTEVELAYLISEAPIIGITGSNGKTTTTTMIGEVLTAAGQHGLLSGNIGYPASQVAQTASDKDTLVMELSSFQLMGVQEFHPEIAVITNLMPTHIDYHGSFSEYVAAKWNIQNKMTAADFLVLNFNQDLAKDLTSKTEATVVPFSTLEKVDGAYLEDGQLYFRGEVVMAANEIGVPGSHNVENALATIAVAKLRDVDNQTIKETLSAFGGVKHRLQFVDDIKGVKFYNDSKSTNILATQKALSGFDNSKVVLIAGGLDRGNEFDELVPDITGLKKMVILGQSAERVKRAADKAGVAYVEATDIADATRKAYELATQGDVVLLSPANASWDMYANFEVRGDLFIDTVAELKE.

119–125 (GSNGKTT) contacts ATP.

The protein belongs to the MurCDEF family.

Its subcellular location is the cytoplasm. The catalysed reaction is UDP-N-acetyl-alpha-D-muramoyl-L-alanine + D-glutamate + ATP = UDP-N-acetyl-alpha-D-muramoyl-L-alanyl-D-glutamate + ADP + phosphate + H(+). It participates in cell wall biogenesis; peptidoglycan biosynthesis. In terms of biological role, cell wall formation. Catalyzes the addition of glutamate to the nucleotide precursor UDP-N-acetylmuramoyl-L-alanine (UMA). This is UDP-N-acetylmuramoylalanine--D-glutamate ligase from Streptococcus pneumoniae (strain CGSP14).